The following is a 374-amino-acid chain: MSPDRTGRGSSSSSSSLKRLVCKSFVRAWGRRRPNLRRAVLLICTASAIYGIVIASQVLRGSTHPGKALRKAQQKVLTDASVRLAGTALEGNTFYMENAQPQGGSTSSSPVTLQPNVVYITLKTKRSKPANIRGTVRPKKRRKYGARRPGVVQDTESKKDTLWSKVPNSQHKSQAQSWIRGIDGHRGGRGTHQSNIRIYSDSAPPWFTKEDISAMRFLSDSRIGHIKQNLLLFESDQTPLMKMPVPPVGSGDCQGQCGVIKRPLDMSEVFAFHLDRVLGLNRTLPSVSRSLEFVQDGQPCPVILWDPSLLPTDNKTQSSIKLKWGTYQEMLRHKCWLNGKAPKADLGCTEIHHQEWCKMALFDFLLQVYTRLDR.

Residues 1–38 (MSPDRTGRGSSSSSSSLKRLVCKSFVRAWGRRRPNLRR) lie on the Cytoplasmic side of the membrane. The chain crosses the membrane as a helical; Signal-anchor for type II membrane protein span at residues 39–61 (AVLLICTASAIYGIVIASQVLRG). Residues 62-374 (STHPGKALRK…LLQVYTRLDR (313 aa)) are Extracellular-facing. A compositionally biased stretch (basic residues) spans 136–146 (VRPKKRRKYGA). The segment at 136 to 177 (VRPKKRRKYGARRPGVVQDTESKKDTLWSKVPNSQHKSQAQS) is disordered. A compositionally biased stretch (polar residues) spans 166–177 (VPNSQHKSQAQS). N-linked (GlcNAc...) asparagine glycans are attached at residues asparagine 281 and asparagine 314.

Belongs to the GASK family.

Its subcellular location is the golgi apparatus membrane. The protein is Golgi-associated kinase 1B of Xenopus laevis (African clawed frog).